The chain runs to 270 residues: Orotidine 5'-phosphate decarboxylase (270 aa).

The Proton donor role is filled by Lys89.

Belongs to the OMP decarboxylase family. Type 2 subfamily.

It catalyses the reaction orotidine 5'-phosphate + H(+) = UMP + CO2. The protein operates within pyrimidine metabolism; UMP biosynthesis via de novo pathway; UMP from orotate: step 2/2. The sequence is that of Orotidine 5'-phosphate decarboxylase from Dehalococcoides mccartyi (strain ATCC BAA-2100 / JCM 16839 / KCTC 5957 / BAV1).